A 159-amino-acid chain; its full sequence is Lipoprotein LpqH (159 aa).

Residues 1–21 (MKRGLTVAVAGAAILVAGLSG) form the signal peptide. A lipid anchor (N-palmitoyl cysteine) is attached at cysteine 22. Cysteine 22 carries the S-diacylglycerol cysteine lipid modification. A disordered region spans residues 24–51 (SNKSTTGSGETTTAAGTTASPGAASGPK). The span at 27–49 (STTGSGETTTAAGTTASPGAASG) shows a compositional bias: low complexity.

It belongs to the mycobacterial 19 kDa antigen family. Modified by Lgt on Cys-22 with an S-linked diacylglycerol with a mixture of C16, C18 and C19 fatty acids, signal peptide is removed by LspA, modifed by Lnt with an amide-linked mixture of C16 and C19 fatty acids.

It is found in the cell membrane. In terms of biological role, might be involved in ligand transport. A host TLR2 agonist, modifies host gene expression in response to pathogen. The chain is Lipoprotein LpqH (lpqH) from Mycobacterium tuberculosis (strain CDC 1551 / Oshkosh).